We begin with the raw amino-acid sequence, 136 residues long: Small ribosomal subunit protein eS6 (136 aa).

Belongs to the eukaryotic ribosomal protein eS6 family.

This Methanosarcina acetivorans (strain ATCC 35395 / DSM 2834 / JCM 12185 / C2A) protein is Small ribosomal subunit protein eS6.